The sequence spans 223 residues: Pre-protein VI (223 aa).

Residues Met1 to Gly28 constitute a propeptide that is removed on maturation. Residues Ala29 to Thr53 form an amphipathic alpha-helix essential for membrane lytic activity region. An involved in endosomal membrane lysis region spans residues Asn31–Asn52. The interval Gly47–Ser73 is interaction with hexon protein. The short motif at Ile66–Val75 is the Nuclear export signal element. 2 disordered regions span residues Glu136–Arg155 and Pro166–Arg203. Over residues Pro138–Val151 the composition is skewed to pro residues. Low complexity predominate over residues Pro166 to Thr182. Residues Pro189 to Arg198 are compositionally biased toward basic residues. The Nuclear export signal signature appears at Ala204–Ala215. The segment at Leu206–Thr212 is interaction with hexon protein. Residues Gly213–Tyr223 are binds to importin alpha/beta, involved in hexon nuclear import.

This sequence belongs to the adenoviridae protein VI family. In terms of assembly, interacts with hexon protein; this interaction allows nuclear import of hexon trimers and possibly pre-capsid assembly. Interacts (via C-terminal NLS) with importin alpha/beta. As to quaternary structure, interacts (via PPxY motif) with host NEDD4 ubiquitine ligase; this interaction might play a role in virus intracellular transport during entry. Part of a complex composed of the core-capsid bridging protein, the endosome lysis protein VI and the hexon-linking protein VIII; these interactions bridge the virus core to the capsid. Interacts with peripentonal hexons; this interaction stabilizes the capsid by gluing two peripentonal hexons together and joining them with an adjacent group-of-nine hexon. Heterodimer with the viral protease; disulfide-linked. Interacts with the viral protease. Post-translationally, ubiquitinated by Nedd4 following partial capsid disassembly; which might play a role in intracellular virus movement during entry. In terms of processing, contains the major nuclear import and export signals. Proteolytically removed during virion maturation. The processing of the C-terminus turns the precursor into a mature viral structural protein and abrogates its ability to promote hexon import and act as a potential chaperone protein.

It is found in the host nucleus. The protein resides in the host cytoplasm. The protein localises to the virion. In terms of biological role, during virus assembly, promotes hexon trimers nuclear import through nuclear pore complexes via an importin alpha/beta-dependent mechanism. By analogy to herpesviruses capsid assembly, might act as a chaperone to promote the formation of the icosahedral capsid. Functionally, structural component of the virion that provides increased stability to the particle shell through its interaction with the core-capsid bridging protein and the hexon-linking protein VIII. Fibers shedding during virus entry into host cell allows the endosome lysis protein to be exposed as a membrane-lytic peptide. Exhibits pH-independent membrane fragmentation activity and probably mediates viral rapid escape from host endosome via organellar membrane lysis. It is not clear if it then remains partially associated with the capsid and involved in the intracellular microtubule-dependent transport of capsid to the nucleus, or if it is lost during endosomal penetration. Its function is as follows. Cofactor that activates the viral protease. Binds to viral protease in a 1:1 ratio. This is Pre-protein VI from Fowl adenovirus A serotype 1 (strain CELO / Phelps) (FAdV-1).